Here is a 308-residue protein sequence, read N- to C-terminus: MQEIESLHQSVLLQEVLQAFTPLEEGVLIDCTLGLGGHSKALLSQKPHLKLIGIDKDKFAQEIAKERLKAFEGRYNLLSGGFAKRFKEALETHNKEIKGVLVDLGVSSLQLDDDNRGFNFHSHTLDMRMDLKSDLNAQKVINSYPVVALEKIFRDYGEIKEYKKIAHKIAERRAKKPFKDAKDLSDFLSSLSKNKKIHPATLVFQAVRIEVNSELEELKEFLQCARNLKGAILCVISFHSLEDALVKNAFKDYAKNCICDPSSFQCTCSNNHALGAILTKKPITPSPEEIKNNRRSRSAKMRVFQFKP.

S-adenosyl-L-methionine is bound by residues 36–38 (GGH), Asp55, Phe86, Asp103, and Gln110.

It belongs to the methyltransferase superfamily. RsmH family.

It is found in the cytoplasm. The catalysed reaction is cytidine(1402) in 16S rRNA + S-adenosyl-L-methionine = N(4)-methylcytidine(1402) in 16S rRNA + S-adenosyl-L-homocysteine + H(+). Specifically methylates the N4 position of cytidine in position 1402 (C1402) of 16S rRNA. The polypeptide is Ribosomal RNA small subunit methyltransferase H (Helicobacter pylori (strain HPAG1)).